The following is a 525-amino-acid chain: MATLLRSLALFKRNKDKPPITSGSGGAIRGIKHIIIVPIPGDSSITTRSRLLDRLVRLIGNPDVSGPKLTGALIGILSLFVESPGQLIQRITDDPDVSIRLLEVVQSDQSQSGLTFASRGTNMEDEADQYFSHDDPSSSDQSRSGWFENKEISDIEVQDPEGFNMILGTILAQIWVLLAKAVTAPDTAADSELRRWIKYTQQRRVVGEFRLERKWLDVVRNRIAEDLSLRRFMVALILDIKRTPGNKPRIAEMICDIDTYIVEAGLASFILTIKFGIETMYPALGLHEFAGELSTLESLMNLYQQMGETAPYMVILENSIQNKFSAGSYPLLWSYAMGVGVELENSMGGLNFGRSYFDPAYFRLGQEMVRRSAGKVSSTLASELGITAEDARLVSEIAMHTTEDRISRAVGPRQAQVSFLHGDQSENELPGLGGKEDRRVKQGRGEARESYRETGSSRASDARAAHPPTSMPLDIDTASESGQDPQDSRRSADALLRLQAMAGILEEQGSDTDTPRVYNDRDLLD.

Positions 1–36 are homomultimerization; sequence MATLLRSLALFKRNKDKPPITSGSGGAIRGIKHIII. Residues 1–375 form an RNA packaging and organization of the helical nucleocapsid region; sequence MATLLRSLAL…QEMVRRSAGK (375 aa). The ncore stretch occupies residues 1–403; the sequence is MATLLRSLAL…VSEIAMHTTE (403 aa). Positions 70-77 match the Nuclear localization signal motif; it reads TGALIGIL. Positions 180, 195, 202, and 260 each coordinate RNA. Thr-279 carries the post-translational modification Phosphothreonine; by host. RNA is bound at residue Asn-351. The segment at 373–391 is homomultimerization; the sequence is AGKVSSTLASELGITAEDA. The tract at residues 404–525 is ntail; sequence DRISRAVGPR…RVYNDRDLLD (122 aa). The interval 418–525 is disordered; it reads SFLHGDQSEN…RVYNDRDLLD (108 aa). Residues 425–440 carry the Nuclear export signal motif; it reads SENELPGLGGKEDRRV. The span at 434-452 shows a compositional bias: basic and acidic residues; the sequence is GKEDRRVKQGRGEARESYR. Positions 477–505 are interaction with the phosphoprotein; the sequence is TASESGQDPQDSRRSADALLRLQAMAGIL. Ser-479 and Ser-510 each carry phosphoserine; by host PIM3.

This sequence belongs to the paramyxoviruses nucleocapsid family. In terms of assembly, homomultimer; forms the nucleocapsid. Binds to viral genomic RNA. N0 interacts (via Ncore) with the phosphoprotein (via N-terminus); this interaction allows P to chaperon N0 to avoid N polymerization and non-specific RNA binding before encapsidation. Interacts (via the Ntail) as N-RNA template with the phosphoprotein (via C-terminus XD); this interaction maintains the P/L complex anchored to the nucleocapsid template during the sequential transcription. Interacts with the phosphoprotein; this interaction leads to the formation of membraneless organelles that function as viral replication factories. Interacts with human FCGR2B protein. Interacts with human PPIA/CYPA and PPIB/CYPB. Post-translationally, phosphorylation at Thr-279 is required for the formation of the nucleocapsid.

Its subcellular location is the virion. The protein localises to the host cytoplasm. It localises to the host nucleus. Forms the helical nucleocapsid (NC) in a ratio of 1 N per 6 ribonucleotides, protecting the genome from nucleases. The nucleocapsid (NC) has a helical structure with either 12.35 or 11.64 N per turn, approximately 20 nm in diameter, with a hollow central cavity approximately 5 nm in diameter. The encapsidated genomic RNA serves as template for transcription and replication; encapsidation by N is coupled to RNA synthesis. Forms the encapsidation complex with the phosphoprotein protein P. Before encapsidation, the newly synthesized free N protein, so-called N0, is chaperoned by P. Participates, together with P, in the formation of viral factories (viroplasms), which are large inclusions in the host cytoplasm where replication takes place. N is released in the blood following lysis of measles infected cells, it interacts then with human FCGR2B on immune cells, inducing apoptosis and blocking inflammatory immune response. The polypeptide is Nucleoprotein (N) (Measles virus (strain Ichinose-B95a) (MeV)).